We begin with the raw amino-acid sequence, 69 residues long: Pleurain-A1 (69 aa).

A signal peptide spans 1–18 (MFTLKKTLLLLFFLGTIS). A propeptide spanning residues 19–43 (ISLCKQERDADEDDGRKMTEEEVKR) is cleaved from the precursor. Cys63 and Cys69 are oxidised to a cystine.

As to expression, expressed by the skin glands.

The protein resides in the secreted. Antimicrobial peptide. Has activity against the Gram-positive bacterium S.aureus ATCC2592 (MIC=15 ug/ml), the Gram-negative bacteria E.coli ATCC25922 (MIC=60 ug/ml), B.dysenteriae (MIC=120 ug/ml), H.pylori NTCT11637 (MIC=30 ug/ml), and the fungus C.albicans ATCC2002 (MIC=30 ug/ml). Has little hemolytic activity on rabbit red blood cells. The chain is Pleurain-A1 from Nidirana pleuraden (Yunnan pond frog).